The primary structure comprises 929 residues: SED5-binding protein 3 (929 aa).

Ser-15 is subject to Phosphoserine. The segment covering 18–28 (ESTVHTGGASS) has biased composition (polar residues). A disordered region spans residues 18-52 (ESTVHTGGASSKKSRRPHRAYHNFSSGTVPTLGNS). Positions 29–38 (KKSRRPHRAY) are enriched in basic residues. Positions 40–52 (NFSSGTVPTLGNS) are enriched in polar residues. A Phosphothreonine modification is found at Thr-72. A phosphoserine mark is found at Ser-83, Ser-85, Ser-94, Ser-101, and Ser-110. At Thr-216 the chain carries Phosphothreonine. The segment at 220 to 244 (CRRCRAYANPKFQFTYDSSVICNIC) is zinc finger-like.

The protein belongs to the SEC23/SEC24 family. SEC24 subfamily. COPII is composed of at least five proteins: the SEC23/24 complex, the SEC13/31 complex and SAR1. Binds to SED5. Interacts with GHR1.

It localises to the cytoplasm. The protein resides in the golgi apparatus membrane. Its subcellular location is the endoplasmic reticulum membrane. Component of the COPII coat, that covers ER-derived vesicles involved in transport from the endoplasmic reticulum to the Golgi apparatus. COPII acts in the cytoplasm to promote the transport of secretory, plasma membrane, and vacuolar proteins from the endoplasmic reticulum to the Golgi complex. This chain is SED5-binding protein 3 (SFB3), found in Saccharomyces cerevisiae (strain ATCC 204508 / S288c) (Baker's yeast).